The primary structure comprises 549 residues: Arginine--tRNA ligase (549 aa).

The short motif at 122–132 is the 'HIGH' region element; sequence ANPTGFLHLGH.

It belongs to the class-I aminoacyl-tRNA synthetase family. As to quaternary structure, monomer.

It localises to the cytoplasm. It carries out the reaction tRNA(Arg) + L-arginine + ATP = L-arginyl-tRNA(Arg) + AMP + diphosphate. The chain is Arginine--tRNA ligase from Mycoplasmoides gallisepticum (strain R(low / passage 15 / clone 2)) (Mycoplasma gallisepticum).